A 270-amino-acid chain; its full sequence is Meiotic recombination 1 protein (270 aa).

The KH domain maps to 191-225; that stretch reads EIKLNKTQITFLIGAKGTRIESLREKSGASIKIIP.

In terms of biological role, required for chromosome pairing and genetic recombination. MER1 may function to bring the axial elements of the synaptonemal complex corresponding to homologous chromosomes together by initiating recombination. MER1 might be responsible for regulating the MER2 gene and/or gene product. The sequence is that of Meiotic recombination 1 protein (MER1) from Saccharomyces cerevisiae (strain ATCC 204508 / S288c) (Baker's yeast).